The following is a 257-amino-acid chain: Dihydroorotate dehydrogenase B (NAD(+)), electron transfer subunit (257 aa).

Residues 2–102 (IGRERMTVVS…LGPLGHGFPL (101 aa)) form the FAD-binding FR-type domain. FAD-binding positions include 53–56 (RPLS), 70–72 (IYR), and 77–78 (GT). The [2Fe-2S] cluster site is built by cysteine 221, cysteine 226, cysteine 229, and cysteine 244.

It belongs to the PyrK family. In terms of assembly, heterotetramer of 2 PyrK and 2 PyrD type B subunits. [2Fe-2S] cluster serves as cofactor. It depends on FAD as a cofactor.

It functions in the pathway pyrimidine metabolism; UMP biosynthesis via de novo pathway; orotate from (S)-dihydroorotate (NAD(+) route): step 1/1. Its function is as follows. Responsible for channeling the electrons from the oxidation of dihydroorotate from the FMN redox center in the PyrD type B subunit to the ultimate electron acceptor NAD(+). The polypeptide is Dihydroorotate dehydrogenase B (NAD(+)), electron transfer subunit (Geobacillus thermodenitrificans (strain NG80-2)).